A 1203-amino-acid polypeptide reads, in one-letter code: Probable phospholipid-transporting ATPase 11 (1203 aa).

The Cytoplasmic segment spans residues Met-1 to Ile-71. The helical transmembrane segment at Pro-72–Leu-93 threads the bilayer. The Extracellular segment spans residues Ser-94 to Ala-97. Residues Leu-98–Lys-120 traverse the membrane as a helical segment. Over Glu-121–Ile-303 the chain is Cytoplasmic. Residues Ile-304–Glu-325 form a helical membrane-spanning segment. Over Thr-326–His-363 the chain is Extracellular. Residues Phe-364 to Val-381 traverse the membrane as a helical segment. Residues Ser-382–Ser-921 lie on the Cytoplasmic side of the membrane. The active-site 4-aspartylphosphate intermediate is Asp-429. Positions 866 and 870 each coordinate Mg(2+). A helical transmembrane segment spans residues Ser-922–Tyr-941. Residues Glu-942–Asp-955 lie on the Extracellular side of the membrane. A helical membrane pass occupies residues Trp-956–Val-975. The Cytoplasmic portion of the chain corresponds to Phe-976–Arg-1005. The helical transmembrane segment at Ile-1006–Leu-1028 threads the bilayer. At Lys-1029–Gly-1041 the chain is on the extracellular side. The helical transmembrane segment at Arg-1042 to Ala-1064 threads the bilayer. The Cytoplasmic portion of the chain corresponds to Ile-1065–Trp-1070. A helical membrane pass occupies residues Leu-1071–Gly-1091. The Extracellular segment spans residues Ala-1092 to Ala-1108. A helical membrane pass occupies residues Leu-1109 to Phe-1133. Residues Lys-1134 to Phe-1203 lie on the Cytoplasmic side of the membrane.

Belongs to the cation transport ATPase (P-type) (TC 3.A.3) family. Type IV subfamily.

It localises to the membrane. It catalyses the reaction ATP + H2O + phospholipidSide 1 = ADP + phosphate + phospholipidSide 2.. Its function is as follows. Involved in transport of phospholipids. This is Probable phospholipid-transporting ATPase 11 from Arabidopsis thaliana (Mouse-ear cress).